A 790-amino-acid chain; its full sequence is Exocyst complex component SEC15A (790 aa).

The stretch at 49-70 (LVHQLKNVARKKEAEIEDLCKT) forms a coiled coil.

The protein belongs to the SEC15 family. In terms of assembly, the exocyst complex is composed of SEC3, SEC5, SEC6, SEC8, SEC10, EXO70A1 and EXO84B.

It is found in the cytoplasm. Its subcellular location is the cytosol. Its function is as follows. Component of the exocyst complex involved in the docking of exocytic vesicles with fusion sites on the plasma membrane during regulated or polarized secretion. Involved in polarized cell growth and organ morphogenesis. During cytokinesis, involved in cell plate initiation, cell plate maturation and formation of new primary cell wall. This chain is Exocyst complex component SEC15A (SEC15A), found in Arabidopsis thaliana (Mouse-ear cress).